The primary structure comprises 251 residues: Triosephosphate isomerase (251 aa).

Residue 9–11 coordinates substrate; the sequence is NWK. The active-site Electrophile is the H95. The Proton acceptor role is filled by E167. Residues G173, S213, and 234-235 contribute to the substrate site; that span reads GG. S213 carries the post-translational modification Phosphoserine.

Belongs to the triosephosphate isomerase family. Homodimer.

It is found in the cytoplasm. The enzyme catalyses D-glyceraldehyde 3-phosphate = dihydroxyacetone phosphate. It functions in the pathway carbohydrate biosynthesis; gluconeogenesis. Its pathway is carbohydrate degradation; glycolysis; D-glyceraldehyde 3-phosphate from glycerone phosphate: step 1/1. Functionally, involved in the gluconeogenesis. Catalyzes stereospecifically the conversion of dihydroxyacetone phosphate (DHAP) to D-glyceraldehyde-3-phosphate (G3P). The chain is Triosephosphate isomerase from Shouchella clausii (strain KSM-K16) (Alkalihalobacillus clausii).